Reading from the N-terminus, the 360-residue chain is 3-dehydroquinate synthase (360 aa).

NAD(+)-binding positions include 106 to 110, 130 to 131, lysine 143, and lysine 152; these read GVIGD and TS. The Zn(2+) site is built by glutamate 185, histidine 246, and histidine 262.

It belongs to the sugar phosphate cyclases superfamily. Dehydroquinate synthase family. The cofactor is Co(2+). Zn(2+) serves as cofactor. It depends on NAD(+) as a cofactor.

Its subcellular location is the cytoplasm. It catalyses the reaction 7-phospho-2-dehydro-3-deoxy-D-arabino-heptonate = 3-dehydroquinate + phosphate. It functions in the pathway metabolic intermediate biosynthesis; chorismate biosynthesis; chorismate from D-erythrose 4-phosphate and phosphoenolpyruvate: step 2/7. Functionally, catalyzes the conversion of 3-deoxy-D-arabino-heptulosonate 7-phosphate (DAHP) to dehydroquinate (DHQ). This Leuconostoc citreum (strain KM20) protein is 3-dehydroquinate synthase.